The chain runs to 377 residues: Ribosomal RNA large subunit methyltransferase G (377 aa).

The protein belongs to the methyltransferase superfamily. RlmG family.

The protein resides in the cytoplasm. The enzyme catalyses guanosine(1835) in 23S rRNA + S-adenosyl-L-methionine = N(2)-methylguanosine(1835) in 23S rRNA + S-adenosyl-L-homocysteine + H(+). Functionally, specifically methylates the guanine in position 1835 (m2G1835) of 23S rRNA. The chain is Ribosomal RNA large subunit methyltransferase G from Shewanella sp. (strain MR-4).